Here is a 253-residue protein sequence, read N- to C-terminus: 5'/3'-nucleotidase SurE (253 aa).

4 residues coordinate a divalent metal cation: Asp8, Asp9, Ser39, and Asn92.

The protein belongs to the SurE nucleotidase family. Requires a divalent metal cation as cofactor.

The protein localises to the cytoplasm. It carries out the reaction a ribonucleoside 5'-phosphate + H2O = a ribonucleoside + phosphate. The enzyme catalyses a ribonucleoside 3'-phosphate + H2O = a ribonucleoside + phosphate. It catalyses the reaction [phosphate](n) + H2O = [phosphate](n-1) + phosphate + H(+). Its function is as follows. Nucleotidase with a broad substrate specificity as it can dephosphorylate various ribo- and deoxyribonucleoside 5'-monophosphates and ribonucleoside 3'-monophosphates with highest affinity to 3'-AMP. Also hydrolyzes polyphosphate (exopolyphosphatase activity) with the preference for short-chain-length substrates (P20-25). Might be involved in the regulation of dNTP and NTP pools, and in the turnover of 3'-mononucleotides produced by numerous intracellular RNases (T1, T2, and F) during the degradation of various RNAs. The polypeptide is 5'/3'-nucleotidase SurE (Shigella boydii serotype 18 (strain CDC 3083-94 / BS512)).